A 403-amino-acid polypeptide reads, in one-letter code: GPI-N-acetylgalactosamine transferase PGAP4 (403 aa).

At 1–22 (MSTSTSPAAMLLRRLRRLSWGS) the chain is on the cytoplasmic side. The chain crosses the membrane as a helical span at residues 23 to 43 (TAVQLFILTVVTFGLLAPLAC). Residues 44-259 (HRLLHSYFYL…RLQHYTNPEP (216 aa)) lie on the Lumenal side of the membrane. Residue Val-109 coordinates UDP-N-acetyl-alpha-D-galactosamine. 2 disulfide bridges follow: Cys-132–Cys-136 and Cys-144–Cys-194. The DXD motif signature appears at 211 to 213 (EDD). The helical transmembrane segment at 260 to 280 (MRILEWVGVGMLLGPLLTWIY) threads the bilayer. Residues 281-287 (MRFASRP) are Cytoplasmic-facing. Residues 288–308 (GFSWPVMLFFSLYSMGLVELV) traverse the membrane as a helical segment. The Lumenal segment spans residues 309 to 403 (GRHYFLELRR…LRYNFHPSLL (95 aa)). A disulfide bond links Cys-332 and Cys-333. UDP-N-acetyl-alpha-D-galactosamine is bound by residues Thr-334, Pro-335, and Lys-362.

This sequence belongs to the PGAP4 family. Glycosylated.

The protein resides in the golgi apparatus membrane. Golgi-resident glycosylphosphatidylinositol (GPI)-N-acetylgalactosamine transferase that catalyzes the N-acetyl-beta-D-galactosamine transfer from an UDP-N-acetyl-alpha-D-galactosamine to the 4-OH-position of first mannose of the glycosylphosphatidylinositol (GPI) of a GPI-anchored protein (GPI-AP). This modification occurs after the fatty acid remodeling step of the GPI-anchor maturation. The polypeptide is GPI-N-acetylgalactosamine transferase PGAP4 (Pongo abelii (Sumatran orangutan)).